Here is a 186-residue protein sequence, read N- to C-terminus: ADP-ribosylation factor-like protein 8B (186 aa).

An intramembrane region (note=Mediates targeting to membranes) is located at residues 1–19 (MLALISRLLDWFRSLFWKE). GTP-binding positions include 29-35 (QYSGKTT), 71-75 (DIGGQ), and 130-133 (NKRD). Residue Lys-141 forms a Glycyl lysine isopeptide (Lys-Gly) (interchain with G-Cter in ubiquitin) linkage.

The protein belongs to the small GTPase superfamily. Arf family. Interacts with tubulin. Interacts with BORCS5; recruits ARL8B to lysosomes. Interacts with VPS41; the interaction mediates the recruitment of the HOPS complex to lysosomes. Interacts (GTP-bound form) with PLEKHM2 (via RUN domain); the interaction is required to recruit the motor protein kinesin-1 on lysosomes. Interacts (GTP-bound form) with PLEKHM1 (via RUN domain); the interaction is required for PLEKHM1 localization to lysosomes and for ARL8B function in delivery and degradation of endocytic and autophagic cargo in lysosomes. PLEKHM1 and PLEKHM2 compete for interaction with ARL8B. Interacts (GTP-bound form) with RUFY1; the interaction is required for RUFY1 endosomal location. When GTP-bound, interacts with RUFY3 and RUFY4, but not with RUFY1, nor RUFY2. Ubiquitinated at Lys-141 by RNF167, leading to its degradation.

It localises to the late endosome membrane. It is found in the lysosome membrane. The protein resides in the cytoplasm. Its subcellular location is the cytoskeleton. The protein localises to the spindle. It localises to the cell projection. It is found in the axon. The protein resides in the synapse. Its subcellular location is the cytolytic granule membrane. The protein localises to the early endosome membrane. It catalyses the reaction GTP + H2O = GDP + phosphate + H(+). In terms of biological role, small GTPase which cycles between active GTP-bound and inactive GDP-bound states. In its active state, binds to a variety of effector proteins playing a key role in the regulation of lysosomal positioning which is important for nutrient sensing, natural killer cell-mediated cytotoxicity and antigen presentation. Along with its effectors, orchestrates lysosomal transport and fusion. Localizes specifically to lysosomal membranes and mediates anterograde lysosomal motility by recruiting PLEKHM2, which in turn recruits the motor protein kinesin-1 on lysosomes. Required for lysosomal and cytolytic granule exocytosis. Critical factor involved in NK cell-mediated cytotoxicity. Drives the polarization of cytolytic granules and microtubule-organizing centers (MTOCs) toward the immune synapse between effector NK lymphocytes and target cells. In neurons, mediates the anterograde axonal long-range transport of presynaptic lysosome-related vesicles required for presynaptic biogenesis and synaptic function. Also acts as a regulator of endosome to lysosome trafficking pathways of special significance for host defense. Recruits RUFY1 onto early endosomes regulating endosomes to trans-Golgi network proteins retrieval. Regulates cargo trafficking to lysosomes by binding to PLEKHM1 and recruiting the HOPS subunit VPS41, resulting in functional assembly of the HOPS complex on lysosomal membranes. Plays an important role in cargo delivery to lysosomes for antigen presentation and microbial killing. Directs the intersection of CD1d with lipid antigens in lysosomes, and plays a role in intersecting phagosomes with lysosomes to generate phagolysosomes that kill microbes. Involved in the process of MHC II presentation. Regulates the delivery of antigens to lysosomes and the formation of MHC II-peptide complexes through the recruitment of the HOPS complex to lysosomes allowing the fusion of late endosomes to lysosomes. May play a role in chromosome segregation. This Bos taurus (Bovine) protein is ADP-ribosylation factor-like protein 8B (ARL8B).